We begin with the raw amino-acid sequence, 683 residues long: Protein distal antenna (683 aa).

The HTH psq-type domain occupies 7-58; that stretch reads TKGKRPLRSLTPRDKIHAIQRIHDGESKASVARDIGVPESTLRGWCKNEDKL. The segment at residues 34–54 is a DNA-binding region (H-T-H motif); that stretch reads KASVARDIGVPESTLRGWCKN. Disordered regions lie at residues 220–255, 336–369, 443–525, 572–597, and 652–683; these read TANN…SVKN, SPPI…TPSG, SETP…SDCI, NQHS…DEEE, and EPQV…RRRK. Residues 227–242 are compositionally biased toward low complexity; the sequence is SKPSVQPPLQVQSPRS. Polar residues-rich tracts occupy residues 338–352 and 445–460; these read PIRS…QHAQ and TPSV…NQLD. The span at 462–478 shows a compositional bias: acidic residues; that stretch reads IEGDEVTDPDLDAEIEG. A compositionally biased stretch (low complexity) spans 575-591; it reads SNNNDISASNNNNNNSN.

Homomers. Interacts with itself, danr, ey and dac to form a complex (or complexes) containing the RD factors.

It localises to the nucleus. Its function is as follows. Probable transcription factor with a role in the retinal determination (RD) network. Regulates ato expression and is required for normal R8 induction and differentiation. Danr appears to repress Dan expression, but Dan is required for Danr expression anterior to the morphogenetic furrow (MF). Dan and Danr lie downstream of so and require dac function for highest levels of expression. Contributes to differentiation of antenna-specific characteristics; effector gene that acts downstream of homothorax (hth), Distal-less (Dll), cut (ct) and spineless (ss) genes to control differentiation of distal antennal structures. This Drosophila pseudoobscura pseudoobscura (Fruit fly) protein is Protein distal antenna.